The chain runs to 409 residues: Nucleoprotein (409 aa).

2 disordered regions span residues 1-84 (MASG…KGGR) and 121-194 (ADTK…DSGD). Residues 15–31 (PVIKLGGPKPPKVGSSG) are compositionally biased toward low complexity. The segment at 29–160 (SSGNASWFQA…GNFRWDFIPL (132 aa)) is RNA-binding. Residues 31-156 (GNASWFQAIK…GGPDGNFRWD (126 aa)) form the CoV N NTD domain. The segment covering 70 to 84 (YWRRQARFKPGKGGR) has biased composition (basic residues). Over residues 162–179 (RGRSGRSTAASSAAASRA) the composition is skewed to low complexity. Residues 180–192 (PSREGSRGRRSDS) are compositionally biased toward basic and acidic residues. A phosphoserine; by host mark is found at Ser190 and Ser192. In terms of domain architecture, CoV N CTD spans 215 to 331 (TKAKADEMAH…QCVDGVGTRP (117 aa)). The interval 226–333 (RYCKRTIPPN…VDGVGTRPKD (108 aa)) is dimerization. 2 disulfides stabilise this stretch: Cys281-Cys308 and Cys320-Cys323. The segment at 327–396 (VGTRPKDDEP…QLEFYDEPKV (70 aa)) is disordered. Over residues 358 to 367 (QRPKKEKKLK) the composition is skewed to basic residues. The span at 368-384 (KQDDEADKALTSDEERN) shows a compositional bias: basic and acidic residues. Thr378 carries the post-translational modification Phosphothreonine; by host. Ser379 bears the Phosphoserine; by host mark.

The protein belongs to the gammacoronavirus nucleocapsid protein family. In terms of assembly, homooligomer. Both monomeric and oligomeric forms interact with RNA. Interacts with protein M. Interacts with NSP3; this interaction serves to tether the genome to the newly translated replicase-transcriptase complex at a very early stage of infection. In terms of processing, ADP-ribosylated. The ADP-ribosylation is retained in the virion during infection. Post-translationally, phosphorylated on serine and threonine residues.

It localises to the virion. The protein localises to the host endoplasmic reticulum-Golgi intermediate compartment. The protein resides in the host Golgi apparatus. Functionally, packages the positive strand viral genome RNA into a helical ribonucleocapsid (RNP) and plays a fundamental role during virion assembly through its interactions with the viral genome and membrane protein M. Plays an important role in enhancing the efficiency of subgenomic viral RNA transcription as well as viral replication. The polypeptide is Nucleoprotein (Gallus gallus (Chicken)).